Here is a 663-residue protein sequence, read N- to C-terminus: Pyoverdine export ATP-binding/permease protein PvdT (663 aa).

An ABC transporter domain is found at 11 to 250 (IELRDIRKRY…PSAGVERHLQ (240 aa)). 48 to 55 (GASGSGKS) contacts ATP. 4 consecutive transmembrane segments (helical) span residues 292 to 312 (ALTL…LAVG), 545 to 565 (IAAI…LMTV), 598 to 618 (VVGG…LLLG), and 626 to 646 (LSAI…FGFM).

The protein belongs to the ABC transporter superfamily. Macrolide exporter (TC 3.A.1.122) family. In terms of assembly, part of the tripartite efflux system PvdRT-OpmQ, which is composed of an inner membrane component with both ATPase and permease domains, PvdT, a periplasmic membrane fusion protein, PvdR, and an outer membrane component, OpmQ.

The protein localises to the cell inner membrane. Functionally, part of the tripartite efflux system PvdRT-OpmQ required for the secretion into the extracellular milieu of the siderophore pyoverdine (PVD), which is involved in iron acquisition. This subunit binds PVD and drives its secretion by hydrolyzing ATP. The system is responsible for export of newly synthesized PVD after the final steps of biosynthesis have taken place in the periplasm. It is also responsible for recycling of PVD after internalization of ferri-PVD into the periplasm by the outer-membrane receptor FpvA and release of iron from PVD, thus making PVD available for new cycles of iron uptake. In addition, can expel unwanted metals complexed with PVD from the periplasm into the extracellular medium. The chain is Pyoverdine export ATP-binding/permease protein PvdT from Pseudomonas aeruginosa (strain ATCC 15692 / DSM 22644 / CIP 104116 / JCM 14847 / LMG 12228 / 1C / PRS 101 / PAO1).